The chain runs to 1205 residues: Centrosome and spindle pole associated protein 1 (1205 aa).

2 coiled-coil regions span residues 12–34 (QKAKLAKDKAELESDPPYMEMKG) and 87–108 (KLKEELRQDYRRYLTQGITQAK). Positions 16–37 (LAKDKAELESDPPYMEMKGKAS) are disordered. Basic and acidic residues predominate over residues 158–173 (STEKVRQVEKNIEPKS). Disordered regions lie at residues 158 to 187 (STEKVRQVEKNIEPKSQRNKNPISQGKSDL), 222 to 277 (SRRP…PGVS), and 380 to 467 (QQKK…GSTL). A compositionally biased stretch (polar residues) spans 176–187 (NKNPISQGKSDL). Basic and acidic residues-rich tracts occupy residues 222–233 (SRRPLKQTKEEV) and 257–275 (ANGERVLDRQHCRADRDPG). Residues 357–391 (EDRELTKRRKEKYRQELLEQIAEQQKKKRREKDLA) are a coiled coil. Basic and acidic residues-rich tracts occupy residues 401-410 (DPEKSPDRLK) and 417-428 (RHFEEMPPERPR). Ser405 bears the Phosphoserine mark. Over residues 433 to 447 (TPPPPFSAPSSPSVP) the composition is skewed to pro residues. The stretch at 574–618 (STQSLQSYQEALQEQIREREARRKKERLEKEEYEAKLEAEMRIYN) forms a coiled coil. The tract at residues 677 to 704 (AENLEDSANKNSGPLQTQSSPFARGNTF) is disordered. The segment covering 685 to 697 (NKNSGPLQTQSSP) has biased composition (polar residues). The stretch at 724–813 (RFQIEEKRQR…EKHNLQLQHY (90 aa)) forms a coiled coil. 2 positions are modified to phosphoserine: Ser850 and Ser869. A disordered region spans residues 862-881 (SSMSRAQSPPVPARKNQLRA). The stretch at 874 to 911 (ARKNQLRAEEEKKNVIMELSEMRKQLRSEERRLQGRLL) forms a coiled coil. Residue Ser915 is modified to Phosphoserine. Residues 993 to 1014 (QQQALLREQQKRLNRIKMRRDA) are a coiled coil. Disordered stretches follow at residues 1086-1105 (GLDFDSSRLHTPQDGLSLKS), 1124-1169 (RLTE…RPGT), and 1182-1205 (NEEQHKGPGKPGTFTWQGLSAAHA). The segment covering 1124–1134 (RLTEQQKKPTN) has biased composition (basic and acidic residues). Positions 1135–1145 (TDDEGSLVDPD) are enriched in acidic residues. Over residues 1146 to 1156 (DIMRHLSDDGR) the composition is skewed to basic and acidic residues.

Interacts with PLEKHG6. Interacts with ARMC9, TOGARAM1, CCDC66, CEP104 and CEP290. Phosphorylated. Phosphorylation increases in colcemide-treated cells.

The protein resides in the cytoplasm. It localises to the cytoskeleton. It is found in the microtubule organizing center. The protein localises to the centrosome. Its subcellular location is the spindle. The protein resides in the spindle pole. It localises to the cell projection. It is found in the cilium. Its function is as follows. May play a role in cell-cycle-dependent microtubule organization. In Mus musculus (Mouse), this protein is Centrosome and spindle pole associated protein 1 (Cspp1).